The sequence spans 779 residues: DNA topoisomerase 1 (779 aa).

The Toprim domain maps to 1–111; that stretch reads MKLVIVESPA…VESDDFFKRV (111 aa). Mg(2+)-binding residues include Glu7 and Asp80. A Topo IA-type catalytic domain is found at 132 to 568; the sequence is DTNLVNAQQA…FWSGFNNNIE (437 aa). The interval 166 to 171 is interaction with DNA; sequence SAGRVQ. Catalysis depends on Tyr304, which acts as the O-(5'-phospho-DNA)-tyrosine intermediate. Residues 600 to 627 form a C4-type zinc finger; sequence CPSCKTGQLSLKLGKFGAFLACSNYPEC.

This sequence belongs to the type IA topoisomerase family. As to quaternary structure, monomer. Mg(2+) is required as a cofactor.

It catalyses the reaction ATP-independent breakage of single-stranded DNA, followed by passage and rejoining.. Its function is as follows. Releases the supercoiling and torsional tension of DNA, which is introduced during the DNA replication and transcription, by transiently cleaving and rejoining one strand of the DNA duplex. Introduces a single-strand break via transesterification at a target site in duplex DNA. The scissile phosphodiester is attacked by the catalytic tyrosine of the enzyme, resulting in the formation of a DNA-(5'-phosphotyrosyl)-enzyme intermediate and the expulsion of a 3'-OH DNA strand. The free DNA strand then undergoes passage around the unbroken strand, thus removing DNA supercoils. Finally, in the religation step, the DNA 3'-OH attacks the covalent intermediate to expel the active-site tyrosine and restore the DNA phosphodiester backbone. The sequence is that of DNA topoisomerase 1 from Rickettsia typhi (strain ATCC VR-144 / Wilmington).